A 93-amino-acid chain; its full sequence is Mammaglobin-A (93 aa).

A signal peptide spans 1–18 (MKLLMVLMLAALSQHCYA). 2 N-linked (GlcNAc...) asparagine glycosylation sites follow: Asn-53 and Asn-68.

The protein belongs to the secretoglobin family. Lipophilin subfamily. As to expression, mammary gland specific. Over-expressed in breast cancer.

Its subcellular location is the secreted. This chain is Mammaglobin-A (SCGB2A2), found in Homo sapiens (Human).